The sequence spans 341 residues: L-sulfolactate dehydrogenase (341 aa).

This sequence belongs to the LDH2/MDH2 oxidoreductase family.

It is found in the cytoplasm. The catalysed reaction is a (2S)-2-hydroxycarboxylate + NAD(+) = a 2-oxocarboxylate + NADH + H(+). It functions in the pathway cofactor biosynthesis; coenzyme M biosynthesis; sulfoacetaldehyde from phosphoenolpyruvate and sulfite: step 3/4. Its pathway is cofactor biosynthesis; 5,6,7,8-tetrahydromethanopterin biosynthesis. Its function is as follows. Catalyzes the reduction of sulfopyruvate to (R)-sulfolactate. Involved in the biosynthesis of both coenzyme M (with (R)-sulfolactate) and methanopterin (with alpha-ketoglutarate). This chain is L-sulfolactate dehydrogenase (comC), found in Methanothermobacter thermautotrophicus (strain ATCC 29096 / DSM 1053 / JCM 10044 / NBRC 100330 / Delta H) (Methanobacterium thermoautotrophicum).